A 308-amino-acid chain; its full sequence is Olfactory receptor 4N5 (308 aa).

The Extracellular portion of the chain corresponds to 1 to 25; the sequence is METQNLTVVTEFILLGLTQSQDAQL. The N-linked (GlcNAc...) asparagine glycan is linked to Asn-5. The helical transmembrane segment at 26 to 49 threads the bilayer; sequence LVFVLVLIFYLIILPGNFLIIFTI. The Cytoplasmic segment spans residues 50–57; sequence KSDPGLTA. Residues 58–79 form a helical membrane-spanning segment; sequence PLYFFLGNLALLDASYSFIVVP. Over 80–100 the chain is Extracellular; the sequence is RMLVDFLSEKKVISYRSCITQ. Cysteines 97 and 189 form a disulfide. Residues 101-120 form a helical membrane-spanning segment; that stretch reads LFFLHFLGAGEMFLLVVMAF. The Cytoplasmic segment spans residues 121–139; the sequence is DRYIAICRPLHYSTIMNPR. Residues 140-158 form a helical membrane-spanning segment; it reads ACYALSLVLWLGGFIHSIV. Topologically, residues 159-195 are extracellular; the sequence is QVALILHLPFCGPNQLDNFFCDVPQVIKLACTNTFVV. The helical transmembrane segment at 196–219 threads the bilayer; it reads ELLMVSNSGLLSLLCFLGLLASYA. Topologically, residues 220–235 are cytoplasmic; the sequence is VILCRIREHSSEGKSK. A helical transmembrane segment spans residues 236 to 258; that stretch reads AISTCTTHIIIIFLMFGPAIFIY. Residues 259 to 269 lie on the Extracellular side of the membrane; sequence TCPFQAFPADK. A helical membrane pass occupies residues 270–289; that stretch reads VVSLFHTVIFPLMNPVIYTL. The Cytoplasmic segment spans residues 290–308; it reads RNQEVKASMRKLLSQHMFC.

This sequence belongs to the G-protein coupled receptor 1 family.

It is found in the cell membrane. Odorant receptor. This is Olfactory receptor 4N5 (OR4N5) from Homo sapiens (Human).